The sequence spans 698 residues: Ubiquitin-like modifier-activating enzyme ATG7 (698 aa).

An FAP motif motif is present at residues 11 to 13; sequence FAP. A Glycyl lysine isopeptide (Lys-Gly) (interchain with G-Cter in ubiquitin) cross-link involves residue Lys-41. The Glycyl thioester intermediate role is filled by Cys-567. Ser-693 bears the Phosphoserine mark.

This sequence belongs to the ATG7 family. Homodimer. Interacts with ATG3; this interaction is essential for the transfer of ATG8-like proteins's thioester from ATG7 to ATG3 and plays a role in the conjugation of ATG12 to ATG5. Interacts with ATG12. Interacts with ATG10. Forms intermediate conjugates with GABARAPL1. Forms intermediate conjugates with ATG8-like proteins such as GABARAP, GABARAPL2 or MAP1LC3A. Interacts with EP300 acetyltransferase. Interacts with FOXO1. In terms of processing, acetylated by EP300. Post-translationally, polyubiquitinated on Lys-41 via 'Lys-63'-linked ubiquitin by TRIM32; this modification positiely regulates ATG8 and ATG12 activating enzyme activity leading to initiation of autophagy under metabolic stress. In terms of tissue distribution, widely expressed, especially in kidney, liver, lymph nodes and bone marrow.

Its subcellular location is the cytoplasm. The protein localises to the preautophagosomal structure. Its function is as follows. E1-like activating enzyme involved in the 2 ubiquitin-like systems required for cytoplasm to vacuole transport (Cvt) and autophagy. Activates ATG12 for its conjugation with ATG5 as well as the ATG8 family proteins for their conjugation with phosphatidylethanolamine. Both systems are needed for the ATG8 association to Cvt vesicles and autophagosomes membranes. Facilitates LC3-I lipidation with phosphatidylethanolamine to form LC3-II which is found on autophagosomal membranes. Required for autophagic death induced by caspase-8 inhibition. Required for mitophagy which contributes to regulate mitochondrial quantity and quality by eliminating the mitochondria to a basal level to fulfill cellular energy requirements and preventing excess ROS production. Modulates p53/TP53 activity to regulate cell cycle and survival during metabolic stress. Also plays a key role in the maintenance of axonal homeostasis, the prevention of axonal degeneration, the maintenance of hematopoietic stem cells, the formation of Paneth cell granules, as well as in adipose differentiation. Plays a role in regulating the liver clock and glucose metabolism by mediating the autophagic degradation of CRY1 (clock repressor) in a time-dependent manner. In Mus musculus (Mouse), this protein is Ubiquitin-like modifier-activating enzyme ATG7.